Consider the following 295-residue polypeptide: Enolase-phosphatase E1 (295 aa).

Asp20 and Glu22 together coordinate Mg(2+). Residues 153–154 (SS) and Lys187 each bind substrate. Asp212 serves as a coordination point for Mg(2+). Residues 260-295 (ETKEENGGATNGKRKIEETNDDVAEEDKAQVYPNKK) form a disordered region.

The protein belongs to the HAD-like hydrolase superfamily. MasA/MtnC family. As to quaternary structure, monomer. The cofactor is Mg(2+).

The protein localises to the cytoplasm. It is found in the nucleus. The catalysed reaction is 5-methylsulfanyl-2,3-dioxopentyl phosphate + H2O = 1,2-dihydroxy-5-(methylsulfanyl)pent-1-en-3-one + phosphate. It participates in amino-acid biosynthesis; L-methionine biosynthesis via salvage pathway; L-methionine from S-methyl-5-thio-alpha-D-ribose 1-phosphate: step 3/6. Its pathway is amino-acid biosynthesis; L-methionine biosynthesis via salvage pathway; L-methionine from S-methyl-5-thio-alpha-D-ribose 1-phosphate: step 4/6. Bifunctional enzyme that catalyzes the enolization of 2,3-diketo-5-methylthiopentyl-1-phosphate (DK-MTP-1-P) into the intermediate 2-hydroxy-3-keto-5-methylthiopentenyl-1-phosphate (HK-MTPenyl-1-P), which is then dephosphorylated to form the acireductone 1,2-dihydroxy-3-keto-5-methylthiopentene (DHK-MTPene). The chain is Enolase-phosphatase E1 from Anopheles gambiae (African malaria mosquito).